Reading from the N-terminus, the 353-residue chain is Ornithine racemase (353 aa).

Residue Lys-35 is the Proton acceptor of the active site. Residue Lys-35 is modified to N6-(pyridoxal phosphate)lysine. Residue Arg-128 coordinates substrate.

The protein belongs to the alanine racemase family. In terms of assembly, homodimer. Pyridoxal 5'-phosphate is required as a cofactor.

The catalysed reaction is L-ornithine = D-ornithine. Its function is as follows. Involved in the ornithine fermentation pathway. Catalyzes the conversion of L-ornithine to D-ornithine. OR could also racemize basic amino acids such as lysine and arginine. Serine, asparagine and alanine could be also converted by OR, but at a lower rate. The protein is Ornithine racemase of Acetoanaerobium sticklandii (strain ATCC 12662 / DSM 519 / JCM 1433 / CCUG 9281 / NCIMB 10654 / HF) (Clostridium sticklandii).